Here is a 392-residue protein sequence, read N- to C-terminus: Formate-dependent phosphoribosylglycinamide formyltransferase (392 aa).

Residues 22-23 (EL) and Glu82 contribute to the N(1)-(5-phospho-beta-D-ribosyl)glycinamide site. ATP-binding positions include Arg114, Lys155, 160–165 (SSGKGQ), 195–198 (EGVV), and Glu203. Residues 119–308 (RLAAEELQLP…EFALHVRAFL (190 aa)) form the ATP-grasp domain. Positions 267 and 279 each coordinate Mg(2+). N(1)-(5-phospho-beta-D-ribosyl)glycinamide is bound by residues Asp286, Lys355, and 362–363 (RR).

This sequence belongs to the PurK/PurT family. Homodimer.

The catalysed reaction is N(1)-(5-phospho-beta-D-ribosyl)glycinamide + formate + ATP = N(2)-formyl-N(1)-(5-phospho-beta-D-ribosyl)glycinamide + ADP + phosphate + H(+). Its pathway is purine metabolism; IMP biosynthesis via de novo pathway; N(2)-formyl-N(1)-(5-phospho-D-ribosyl)glycinamide from N(1)-(5-phospho-D-ribosyl)glycinamide (formate route): step 1/1. In terms of biological role, involved in the de novo purine biosynthesis. Catalyzes the transfer of formate to 5-phospho-ribosyl-glycinamide (GAR), producing 5-phospho-ribosyl-N-formylglycinamide (FGAR). Formate is provided by PurU via hydrolysis of 10-formyl-tetrahydrofolate. The protein is Formate-dependent phosphoribosylglycinamide formyltransferase of Shigella boydii serotype 4 (strain Sb227).